The primary structure comprises 60 residues: Putative SERF-like protein (60 aa).

The segment covering methionine 1 to alanine 53 has biased composition (basic and acidic residues). Residues methionine 1–lysine 60 are disordered.

It belongs to the SERF family.

This is Putative SERF-like protein from Drosophila melanogaster (Fruit fly).